A 153-amino-acid chain; its full sequence is MSKTERPSRRAALLGDRPGSYAIARHVRMSASKCRRVINLVRGMDAVDAVTMLKFQPQAAAEPIRKVIASAMANAEQTEGLRADDLYISQAFVDEGITMRRIRPRAKGSASRILKRSAHITVVVEPKEARQARKKAKSGRPAAAAKSETEKGA.

The interval 125 to 153 is disordered; it reads EPKEARQARKKAKSGRPAAAAKSETEKGA.

It belongs to the universal ribosomal protein uL22 family. In terms of assembly, part of the 50S ribosomal subunit.

Its function is as follows. This protein binds specifically to 23S rRNA; its binding is stimulated by other ribosomal proteins, e.g. L4, L17, and L20. It is important during the early stages of 50S assembly. It makes multiple contacts with different domains of the 23S rRNA in the assembled 50S subunit and ribosome. Functionally, the globular domain of the protein is located near the polypeptide exit tunnel on the outside of the subunit, while an extended beta-hairpin is found that lines the wall of the exit tunnel in the center of the 70S ribosome. The protein is Large ribosomal subunit protein uL22 of Cutibacterium acnes (strain DSM 16379 / KPA171202) (Propionibacterium acnes).